The primary structure comprises 291 residues: MERNGEIVNNGSIIIPGGGGPVTESPLDQFGIHPILDLNIGKYYVSFTNLSLSMLLTLGLVLLLVFVVTKKGGGKSVPNAFQSLVELIYDFVPNLVNEQIGGLSGNVKHKFFPCISVTFTFSLFRNPQGMIPFSFTVTSHFLITLALSFSIFIGITIVGFQRHGLHFFSFLLPAGVPLPLAPFLVLLELISHCFRALSSGIRLFANMMAGHSSVKILSGFAWTMLFLNNIFYFLGDLGPLFIVLALTGLELGVAISQAHVSTISICIYLNDATNLHQNESFHNCIKTRSQS.

5 consecutive transmembrane segments (helical) span residues 47-67, 140-160, 167-187, 207-227, and 230-250; these read FTNLSLSMLLTLGLVLLLVFV, HFLITLALSFSIFIGITIVGF, FFSFLLPAGVPLPLAPFLVLL, MMAGHSSVKILSGFAWTMLFL, and IFYFLGDLGPLFIVLALTGLE.

This sequence belongs to the ATPase A chain family. F-type ATPases have 2 components, CF(1) - the catalytic core - and CF(0) - the membrane proton channel. CF(1) has five subunits: alpha(3), beta(3), gamma(1), delta(1), epsilon(1). CF(0) has three main subunits: a, b and c.

Its subcellular location is the mitochondrion inner membrane. Mitochondrial membrane ATP synthase (F(1)F(0) ATP synthase or Complex V) produces ATP from ADP in the presence of a proton gradient across the membrane which is generated by electron transport complexes of the respiratory chain. F-type ATPases consist of two structural domains, F(1) - containing the extramembraneous catalytic core and F(0) - containing the membrane proton channel, linked together by a central stalk and a peripheral stalk. During catalysis, ATP synthesis in the catalytic domain of F(1) is coupled via a rotary mechanism of the central stalk subunits to proton translocation. Key component of the proton channel; it may play a direct role in the translocation of protons across the membrane. This Zea mays (Maize) protein is ATP synthase subunit a (ATP6).